Consider the following 268-residue polypeptide: 4-hydroxy-tetrahydrodipicolinate reductase (268 aa).

Residues 8-13 and Asp-35 contribute to the NAD(+) site; that span reads GAAGRM. An NADP(+)-binding site is contributed by Arg-36. Residues 99–101 and 123–126 contribute to the NAD(+) site; these read GTT and AANF. His-156 acts as the Proton donor/acceptor in catalysis. Residue His-157 participates in (S)-2,3,4,5-tetrahydrodipicolinate binding. Lys-160 functions as the Proton donor in the catalytic mechanism. 166–167 serves as a coordination point for (S)-2,3,4,5-tetrahydrodipicolinate; the sequence is GT.

The protein belongs to the DapB family.

Its subcellular location is the cytoplasm. The catalysed reaction is (S)-2,3,4,5-tetrahydrodipicolinate + NAD(+) + H2O = (2S,4S)-4-hydroxy-2,3,4,5-tetrahydrodipicolinate + NADH + H(+). It carries out the reaction (S)-2,3,4,5-tetrahydrodipicolinate + NADP(+) + H2O = (2S,4S)-4-hydroxy-2,3,4,5-tetrahydrodipicolinate + NADPH + H(+). It participates in amino-acid biosynthesis; L-lysine biosynthesis via DAP pathway; (S)-tetrahydrodipicolinate from L-aspartate: step 4/4. Its function is as follows. Catalyzes the conversion of 4-hydroxy-tetrahydrodipicolinate (HTPA) to tetrahydrodipicolinate. This Pseudomonas aeruginosa (strain LESB58) protein is 4-hydroxy-tetrahydrodipicolinate reductase.